The chain runs to 248 residues: NAD-dependent protein deacylase 2 (248 aa).

Positions methionine 1–isoleucine 248 constitute a Deacetylase sirtuin-type domain. Residues glycine 19 to tyrosine 38 and glutamine 102 to aspartate 105 each bind NAD(+). The active-site Proton acceptor is the histidine 122. Positions 130, 133, 152, and 155 each coordinate Zn(2+). NAD(+)-binding positions include glycine 193–threonine 195, asparagine 219–glutamine 221, and alanine 237.

Belongs to the sirtuin family. Class III subfamily. Zn(2+) is required as a cofactor.

It localises to the cytoplasm. It carries out the reaction N(6)-acetyl-L-lysyl-[protein] + NAD(+) + H2O = 2''-O-acetyl-ADP-D-ribose + nicotinamide + L-lysyl-[protein]. NAD-dependent protein deacetylase which modulates the activities of several proteins which are inactive in their acetylated form. In Pseudomonas syringae pv. tomato (strain ATCC BAA-871 / DC3000), this protein is NAD-dependent protein deacylase 2 (cobB2).